Reading from the N-terminus, the 332-residue chain is MSLKDHLIHNVHKEEHAHAHNKISVVGVGAVGMACAISILMKDLADELTLVDVVEDKLKGEMLDLQHGSLFLKTPKIISGKDYSVTAHSKLVIVTAGARQQEGESRLNLVQRNVNIFKFIIPNVVKYSPDCKLLIVSNPVDILTYVAWKISGFPKHRVIGSGCNLDSARFRHLMGERLGIHPLSCHGWIVGEHGDSSVPVWSGVNVAGVSLKALHPDMGTDADKEHWKEVHKQVVDSAYEVIKLKGYTSWAIGLSVADLAETIMKNLRRVHPISTAVKGMHGIKDDVFLSVPCVLGSSGITDVVKMILKPDEEEKIKKSADTLWGIQKELQF.

Residues 29-57 and R99 contribute to the NAD(+) site; that span reads GAVG…VEDK. Substrate is bound by residues R106, N138, and R169. Position 138 (N138) interacts with NAD(+). Catalysis depends on H193, which acts as the Proton acceptor. Residue T248 coordinates substrate.

The protein belongs to the LDH/MDH superfamily. LDH family. Homotetramer.

Its subcellular location is the cytoplasm. The catalysed reaction is (S)-lactate + NAD(+) = pyruvate + NADH + H(+). The protein operates within fermentation; pyruvate fermentation to lactate; (S)-lactate from pyruvate: step 1/1. Functionally, interconverts simultaneously and stereospecifically pyruvate and lactate with concomitant interconversion of NADH and NAD(+). The polypeptide is L-lactate dehydrogenase A chain (LDHA) (Gallus gallus (Chicken)).